An 812-amino-acid chain; its full sequence is MLMTTTTIAMSLSHDVIIAAAQRAARAIPPLWPLASSVAVNPFLGQASEPLEVAAARLRRASGIAVTMPRSWYAERLQSGEITEDDLQAAFQTAPAARRPPNVSALKHAIKVARPAPQAIPTVAELARDVTAIDWPGIVNERIGHWAAGYFDQGQALWAVGQSGGAYSTWRIIATHDLTPEIAGLAGFSQSVSDAPATAEDALVDCVARLGLSPDALDGYFHRLLTTLGGWGQVARYRLWQAELNGGTDACVTDLLAIRMLWEAALLHNGGSALVPGWQSAIAAYAAPVAASSDDVVDSILQEAAERAAQRKLNTVLAAPSSARLSRGRLTLQMAFCIDVRSEVFRRALESLDSGITTLGFAGFFGFGIGHRRFASDVVEARLPVLLSPGVVTCAGEPTPAANAAELSARITARAKRAWGRFKLAAISSFAFVEATGPIYIAKLLRDGLALARHHAPTDPAPRPAHELDLDTRLTMAARILKAMSFTSNFARLVVLAGHGAKVVNNPHASALHCGACGGYSGEVNARLLASLLNDHQVRAGLAERGIVIPADTLFLAALHDTTTDAVTLFADDHPSPTHAQDLAQVTQWLAAAGALARGERALRLPRANRSQDIAHRARDWAEIRPEWALAGCQAFIAAPRSRSAGRDLAGRAFLHDYDWRCDHGFGVLELILTAPVVVASWISLQYYGSTVAPERFGAGNKLLHNVTGGIGVVEGNGGILRTGLPWQSVHDGERLIHEPLRLSVLIEAPTEAIGAILERHPQLRALFDNRWLHLFALDDEGRMARRYIGDLSWETYVGDASSQSNRASTLA.

Residues Cys-337, Asp-339, His-499, and Cys-514 each coordinate Zn(2+).

The protein belongs to the inorganic carbon transporter (TC 9.A.2) DabA family. Forms a complex with DabB. The cofactor is Zn(2+).

It is found in the cell inner membrane. Its function is as follows. Part of an energy-coupled inorganic carbon pump. This chain is Probable inorganic carbon transporter subunit DabA, found in Xanthomonas oryzae pv. oryzae (strain MAFF 311018).